The chain runs to 257 residues: Ribonuclease PH (257 aa).

Residues R86 and 124–126 contribute to the phosphate site; that span reads GTR.

It belongs to the RNase PH family. As to quaternary structure, homohexameric ring arranged as a trimer of dimers.

The enzyme catalyses tRNA(n+1) + phosphate = tRNA(n) + a ribonucleoside 5'-diphosphate. Functionally, phosphorolytic 3'-5' exoribonuclease that plays an important role in tRNA 3'-end maturation. Removes nucleotide residues following the 3'-CCA terminus of tRNAs; can also add nucleotides to the ends of RNA molecules by using nucleoside diphosphates as substrates, but this may not be physiologically important. Probably plays a role in initiation of 16S rRNA degradation (leading to ribosome degradation) during starvation. The chain is Ribonuclease PH from Sulfurihydrogenibium sp. (strain YO3AOP1).